The primary structure comprises 954 residues: Glycine dehydrogenase (decarboxylating) (954 aa).

Lys704 is subject to N6-(pyridoxal phosphate)lysine.

This sequence belongs to the GcvP family. The glycine cleavage system is composed of four proteins: P, T, L and H. Pyridoxal 5'-phosphate is required as a cofactor.

It carries out the reaction N(6)-[(R)-lipoyl]-L-lysyl-[glycine-cleavage complex H protein] + glycine + H(+) = N(6)-[(R)-S(8)-aminomethyldihydrolipoyl]-L-lysyl-[glycine-cleavage complex H protein] + CO2. The glycine cleavage system catalyzes the degradation of glycine. The P protein binds the alpha-amino group of glycine through its pyridoxal phosphate cofactor; CO(2) is released and the remaining methylamine moiety is then transferred to the lipoamide cofactor of the H protein. This Rhizobium etli (strain ATCC 51251 / DSM 11541 / JCM 21823 / NBRC 15573 / CFN 42) protein is Glycine dehydrogenase (decarboxylating).